The primary structure comprises 445 residues: MSRQYFGTDGIRGCTNKDPMTADVAMRVGQAAGAYFKRGLHRHRVLIGKDTRLSGYMVESALMAGFTSVGMDVVLVGPLPTPGVALLTRSMRADLGVMISASHNPFSDNGIKLFGPNGYKLSEEEEKAIEEAIDQPPLLAAPADIGRARRIDDAQGRYIHAVKSSFPESLRLDKLRLVLDCANGAAYQVAPAVLWELGAEVITLGVAPNGLNINDHCGSTDPSALQKKVLETRADLGIALDGDADRVIIVDEKGEIVDGDQIMALIATSAQKRNLLKGNTTVATVMSNLGLERYLSKLGIQLLRTQVGDRHVVEAMRAGGYTVGGEQSGHIILSYHTTTGDGLVAALQVLADLVQSDKKASELLHVFDPFPQLLKNVRYSSGQPLEDESVCEAISEAEESLKGKGRLLIRKSGTEPLIRVMAEAEDPDLVHQIVDHICETVRRAA.

The active-site Phosphoserine intermediate is the Ser102. Residues Ser102, Asp241, Asp243, and Asp245 each coordinate Mg(2+). Residue Ser102 is modified to Phosphoserine.

This sequence belongs to the phosphohexose mutase family. The cofactor is Mg(2+). Activated by phosphorylation.

The enzyme catalyses alpha-D-glucosamine 1-phosphate = D-glucosamine 6-phosphate. Catalyzes the conversion of glucosamine-6-phosphate to glucosamine-1-phosphate. The polypeptide is Phosphoglucosamine mutase (Zymomonas mobilis subsp. mobilis (strain ATCC 31821 / ZM4 / CP4)).